Consider the following 266-residue polypeptide: Thymidylate synthase (266 aa).

Arg-24 contributes to the dUMP binding site. His-54 lines the (6R)-5,10-methylene-5,6,7,8-tetrahydrofolate pocket. Residue 129-130 (RR) participates in dUMP binding. The active-site Nucleophile is the Cys-149. Residues 169–172 (RSAD), Asn-180, and 210–212 (HIY) contribute to the dUMP site. Residue Asp-172 coordinates (6R)-5,10-methylene-5,6,7,8-tetrahydrofolate. Ala-265 lines the (6R)-5,10-methylene-5,6,7,8-tetrahydrofolate pocket.

Belongs to the thymidylate synthase family. Bacterial-type ThyA subfamily. Homodimer.

The protein localises to the cytoplasm. It catalyses the reaction dUMP + (6R)-5,10-methylene-5,6,7,8-tetrahydrofolate = 7,8-dihydrofolate + dTMP. The protein operates within pyrimidine metabolism; dTTP biosynthesis. Catalyzes the reductive methylation of 2'-deoxyuridine-5'-monophosphate (dUMP) to 2'-deoxythymidine-5'-monophosphate (dTMP) while utilizing 5,10-methylenetetrahydrofolate (mTHF) as the methyl donor and reductant in the reaction, yielding dihydrofolate (DHF) as a by-product. This enzymatic reaction provides an intracellular de novo source of dTMP, an essential precursor for DNA biosynthesis. In Corynebacterium glutamicum (strain R), this protein is Thymidylate synthase.